We begin with the raw amino-acid sequence, 812 residues long: Mitochondrial intermediate peptidase (812 aa).

A mitochondrion-targeting transit peptide spans 1–35 (MLKLLRPRPWVCNSCLNRVAFPKPYPVGSRSTRWL). The segment at 518–544 (STSEGGPAFGSPESAANDGMAASRGAS) is disordered. Position 587 (histidine 587) interacts with Zn(2+). Residue glutamate 588 is part of the active site. Histidine 591 and histidine 594 together coordinate Zn(2+).

Belongs to the peptidase M3 family. The cofactor is Zn(2+).

It is found in the mitochondrion matrix. The enzyme catalyses Release of an N-terminal octapeptide as second stage of processing of some proteins imported into the mitochondrion.. In terms of biological role, cleaves proteins, imported into the mitochondrion, to their mature size. While most mitochondrial precursor proteins are processed to the mature form in one step by mitochondrial processing peptidase (MPP), the sequential cleavage by MIP of an octapeptide after initial processing by MPP is a required step for a subgroup of nuclear-encoded precursor proteins destined for the matrix or the inner membrane. The chain is Mitochondrial intermediate peptidase (OCT1) from Pyricularia oryzae (strain 70-15 / ATCC MYA-4617 / FGSC 8958) (Rice blast fungus).